The following is a 677-amino-acid chain: Spore coat protein SP87 (677 aa).

An N-terminal signal peptide occupies residues 1 to 21 (MLFLKNIGVFFMIFLVSKSYA). In terms of domain architecture, DSCP-N spans 22–142 (TDCNKITNEE…GESICEGLSS (121 aa)). N-linked (GlcNAc...) asparagine glycosylation occurs at Asn72. The segment covering 148-174 (GGGSSGGTSGGSSSGGTSGGSSSGGTS) has biased composition (gly residues). The segment at 148–184 (GGGSSGGTSGGSSSGGTSGGSSSGGTSGSSSSGSSSG) is disordered. Low complexity predominate over residues 175–184 (GSSSSGSSSG). Follistatin-like domains lie at 188–210 (SCST…ATCL), 231–253 (SCLT…VNCV), 275–298 (PCRD…AKCV), 315–338 (PCKD…AKCV), 355–378 (PCSN…AKCV), 418–440 (RCSL…ECCV), 479–501 (VCDL…KCCV), 515–535 (NKRC…ECCV), and 571–593 (KCSL…ECCV).

Post-translationally, disulfide bonding is important for associating SP87 with the coat. Phosphorylated on serine residues.

It is found in the cytoplasmic vesicle. Its subcellular location is the secretory vesicle. The protein localises to the spore coat. Functionally, may contribute to the structure of the coat at the interface between the middle, cellulosic layer and the outer, electron-dense, proteinaceous layer. In Dictyostelium discoideum (Social amoeba), this protein is Spore coat protein SP87 (pspD).